A 332-amino-acid polypeptide reads, in one-letter code: 5,10-methylenetetrahydromethanopterin reductase (332 aa).

This sequence belongs to the mer family.

It is found in the cytoplasm. It catalyses the reaction 5-methyl-5,6,7,8-tetrahydromethanopterin + oxidized coenzyme F420-(gamma-L-Glu)(n) + H(+) = 5,10-methylenetetrahydromethanopterin + reduced coenzyme F420-(gamma-L-Glu)(n). It functions in the pathway metabolic intermediate metabolism; lactate oxidation. Its function is as follows. Catalyzes the oxidation of methyl-H(4)MPT to methylene-H(4)MPT. This is 5,10-methylenetetrahydromethanopterin reductase from Archaeoglobus fulgidus (strain ATCC 49558 / DSM 4304 / JCM 9628 / NBRC 100126 / VC-16).